A 299-amino-acid chain; its full sequence is Leucine zipper transcription factor-like protein 1 (299 aa).

Residues 96 to 296 are a coiled coil; sequence LKLQTDISEL…DLRKRLAQYE (201 aa). The interval 145–299 is interaction with BSS9; it reads GTAELLNKEI…KRLAQYEPED (155 aa).

This sequence belongs to the LZTFL1 family. In terms of assembly, self-associates. Interacts with BBS9; the interaction mediates the association of LZTL1 with the BBsome complex and regulates BBSome ciliary trafficking. As to expression, expressed in prostate, ovary, stomach, pancreas, esophagus, breast, liver, bladder, kidney, thyroid, colon and lung (at protein level). Down-regulated in multiple primary tumors (at protein level). Detected in testis, heart, skeletal muscle, thymus, spleen, small intestine, and peripheral blood leukocytes.

The protein localises to the cytoplasm. Functionally, regulates ciliary localization of the BBSome complex. Together with the BBSome complex, controls SMO ciliary trafficking and contributes to the sonic hedgehog (SHH) pathway regulation. May play a role in neurite outgrowth. May have tumor suppressor function. This is Leucine zipper transcription factor-like protein 1 (LZTFL1) from Homo sapiens (Human).